The sequence spans 249 residues: Proteasome activator complex subunit 1 (249 aa).

The tract at residues 60 to 102 is disordered; that stretch reads PLDIPVPDPVKEKEKEERKKQQEKEEKDEKKKGDEDDKGPPCG. Positions 68-98 are enriched in basic and acidic residues; it reads PVKEKEKEERKKQQEKEEKDEKKKGDEDDKG.

It belongs to the PA28 family. Heterodimer of PSME1 and PSME2, which forms a hexameric ring. PSME1 can form homoheptamers.

Its function is as follows. Implicated in immunoproteasome assembly and required for efficient antigen processing. The PA28 activator complex enhances the generation of class I binding peptides by altering the cleavage pattern of the proteasome. This chain is Proteasome activator complex subunit 1 (Psme1), found in Rattus norvegicus (Rat).